The chain runs to 86 residues: Small ribosomal subunit protein uS15 (86 aa).

Residues 1-10 (MSIDTQSIIE) are compositionally biased toward polar residues. The segment at 1–21 (MSIDTQSIIENNKRSAHDTGS) is disordered.

The protein belongs to the universal ribosomal protein uS15 family. In terms of assembly, part of the 30S ribosomal subunit. Forms a bridge to the 50S subunit in the 70S ribosome, contacting the 23S rRNA.

Its function is as follows. One of the primary rRNA binding proteins, it binds directly to 16S rRNA where it helps nucleate assembly of the platform of the 30S subunit by binding and bridging several RNA helices of the 16S rRNA. In terms of biological role, forms an intersubunit bridge (bridge B4) with the 23S rRNA of the 50S subunit in the ribosome. In Xylella fastidiosa (strain M23), this protein is Small ribosomal subunit protein uS15.